The sequence spans 181 residues: Protein CRABS CLAW (181 aa).

The C4-type zinc finger occupies 26–53 (CSICNTILAVGIPLKRMLDTVTVKCGHC). Residues 80 to 122 (GSDYKKGSSSSSSSSTSSDQPPSPSPPFVVKPPEKKQRLPSAY) form a disordered region. Low complexity predominate over residues 87–99 (SSSSSSSSTSSDQ). A compositionally biased stretch (pro residues) spans 100–109 (PPSPSPPFVV).

This sequence belongs to the YABBY family. In terms of tissue distribution, restricted to flowers, mostly in carpels and nectaries. Expressed at low levels in sepal primordia (buds), sepal receptacle and developing petal. Not detected in placental tissues, septum, stigma and ovules.

It is found in the nucleus. Transcription factor required for the initiation of nectary development. Also involved in suppressing early radial growth of the gynoecium, in promoting its later elongation and in fusion of its carpels by regulating both cell division and expansion. Establishes the polar differentiation in the carpels by specifying abaxial cell fate in the ovary wall. Regulates both cell division and expansion. The polypeptide is Protein CRABS CLAW (Arabidopsis thaliana (Mouse-ear cress)).